A 139-amino-acid polypeptide reads, in one-letter code: Actin-depolymerizing factor 7 (139 aa).

The region spanning 7-139 (GMAVDDECKL…GLDVIRGRAN (133 aa)) is the ADF-H domain.

Belongs to the actin-binding proteins ADF family.

In terms of biological role, actin-depolymerizing protein. Severs actin filaments (F-actin) and binds to actin monomers. This chain is Actin-depolymerizing factor 7 (ADF7), found in Oryza sativa subsp. japonica (Rice).